The primary structure comprises 157 residues: Putative electron transport protein YsaA (157 aa).

4Fe-4S ferredoxin-type domains are found at residues asparagine 2–cysteine 32, lysine 48–glycine 80, glycine 80–serine 109, and lysine 112–valine 144. [4Fe-4S] cluster-binding residues include cysteine 12, cysteine 15, cysteine 18, cysteine 22, cysteine 58, cysteine 61, cysteine 66, cysteine 70, cysteine 89, cysteine 92, cysteine 95, cysteine 99, cysteine 118, cysteine 121, cysteine 130, and cysteine 134.

This is Putative electron transport protein YsaA (ysaA) from Escherichia coli (strain K12).